A 132-amino-acid polypeptide reads, in one-letter code: Myelin P2 protein (132 aa).

Position 2 is an N-acetylserine (Ser2). Arg107 serves as a coordination point for (9Z)-octadecenoate. Position 107 (Arg107) interacts with hexadecanoate. Cys118 and Cys125 form a disulfide bridge. 127-129 (RIY) serves as a coordination point for (9Z)-octadecenoate. 127-129 (RIY) lines the hexadecanoate pocket.

Belongs to the calycin superfamily. Fatty-acid binding protein (FABP) family. In terms of assembly, monomer.

It localises to the cytoplasm. Functionally, may play a role in lipid transport protein in Schwann cells. May bind cholesterol. In Sus scrofa (Pig), this protein is Myelin P2 protein.